The following is a 468-amino-acid chain: ATP synthase subunit beta (468 aa).

155–162 (GGAGVGKT) lines the ATP pocket.

It belongs to the ATPase alpha/beta chains family. As to quaternary structure, F-type ATPases have 2 components, CF(1) - the catalytic core - and CF(0) - the membrane proton channel. CF(1) has five subunits: alpha(3), beta(3), gamma(1), delta(1), epsilon(1). CF(0) has three main subunits: a(1), b(2) and c(9-12). The alpha and beta chains form an alternating ring which encloses part of the gamma chain. CF(1) is attached to CF(0) by a central stalk formed by the gamma and epsilon chains, while a peripheral stalk is formed by the delta and b chains.

The protein localises to the cell membrane. It carries out the reaction ATP + H2O + 4 H(+)(in) = ADP + phosphate + 5 H(+)(out). Produces ATP from ADP in the presence of a proton gradient across the membrane. The catalytic sites are hosted primarily by the beta subunits. In Streptococcus thermophilus (strain ATCC BAA-250 / LMG 18311), this protein is ATP synthase subunit beta.